The following is a 251-amino-acid chain: L-ascorbate peroxidase 2, cytosolic (251 aa).

The Proton acceptor role is filled by His43. The interval 113–137 (EVPFHPGRQDKPEPPPEGRLPDATQ) is disordered. Residues 119-132 (GRQDKPEPPPEGRL) show a composition bias toward basic and acidic residues. His164 is a heme b binding site. The K(+) site is built by Thr165, Thr181, Asn183, Ile186, and Asp188.

This sequence belongs to the peroxidase family. Ascorbate peroxidase subfamily. Heme b serves as cofactor. In terms of tissue distribution, expressed in aerial vegetative parts and reproductive organs. Expressed in roots, leaves, stems and flowers. Expressed in young leaves, internodes, blade ears, stems and anthers.

It localises to the cytoplasm. The catalysed reaction is L-ascorbate + H2O2 = L-dehydroascorbate + 2 H2O. Inhibited by p-chloromercuriphenylsulfonic acid (CMPSA). In terms of biological role, plays a key role in hydrogen peroxide removal. Plays an important role in plant growth and development by protecting the seedlings from abiotic stresses through scavenging reactive oxygen species. Required for pollen viability. The polypeptide is L-ascorbate peroxidase 2, cytosolic (Oryza sativa subsp. japonica (Rice)).